The sequence spans 178 residues: Cytochrome b6-f complex iron-sulfur subunit (178 aa).

The helical transmembrane segment at 20–42 threads the bilayer; the sequence is LLTFGTATGVALGALYPVANYFM. One can recognise a Rieske domain in the interval 71 to 161; sequence NHPAGDRSLV…IDVEDDKVFV (91 aa). [2Fe-2S] cluster is bound by residues cysteine 107, histidine 109, cysteine 125, and histidine 128. Cysteine 112 and cysteine 127 form a disulfide bridge.

Belongs to the Rieske iron-sulfur protein family. In terms of assembly, the 4 large subunits of the cytochrome b6-f complex are cytochrome b6, subunit IV (17 kDa polypeptide, PetD), cytochrome f and the Rieske protein, while the 4 small subunits are PetG, PetL, PetM and PetN. The complex functions as a dimer. [2Fe-2S] cluster serves as cofactor.

Its subcellular location is the cellular thylakoid membrane. The enzyme catalyses 2 oxidized [plastocyanin] + a plastoquinol + 2 H(+)(in) = 2 reduced [plastocyanin] + a plastoquinone + 4 H(+)(out). In terms of biological role, component of the cytochrome b6-f complex, which mediates electron transfer between photosystem II (PSII) and photosystem I (PSI), cyclic electron flow around PSI, and state transitions. The polypeptide is Cytochrome b6-f complex iron-sulfur subunit (Prochlorococcus marinus (strain MIT 9211)).